A 662-amino-acid chain; its full sequence is Protein translocase subunit SecA 2 (662 aa).

ATP-binding positions include Gln-110, 128 to 132 (GEGKT), and Asp-538.

The protein belongs to the SecA family. Monomer and homodimer. Part of the essential Sec protein translocation apparatus which comprises SecA, SecYEG and auxiliary proteins SecDF. Other proteins may also be involved.

Its subcellular location is the cell inner membrane. The protein localises to the cytoplasm. The enzyme catalyses ATP + H2O + cellular proteinSide 1 = ADP + phosphate + cellular proteinSide 2.. Functionally, part of the Sec protein translocase complex. Interacts with the SecYEG preprotein conducting channel. Has a central role in coupling the hydrolysis of ATP to the transfer of proteins into and across the cell membrane, serving as an ATP-driven molecular motor driving the stepwise translocation of polypeptide chains across the membrane. This chain is Protein translocase subunit SecA 2, found in Chlorobium chlorochromatii (strain CaD3).